Here is a 786-residue protein sequence, read N- to C-terminus: m7GpppN-mRNA hydrolase dcap-2 (786 aa).

Residues 25–61 (QKQNKSTEEPPSSVQKLLASLQQAQNKSDLSEQPSTS) are compositionally biased toward polar residues. Positions 25–148 (QKQNKSTEEP…QQQQQYKGPR (124 aa)) are disordered. Basic residues predominate over residues 62 to 72 (KPKKNEKRKKA). 2 stretches are compositionally biased toward polar residues: residues 101–111 (MQQQAENARIS) and 118–133 (QVSTSKGSSRNTTAPE). Residues 134–144 (QQNYQQQQQQY) are compositionally biased toward low complexity. The 129-residue stretch at 238–366 (STVPTYGAIL…LPAYLQGNKF (129 aa)) folds into the Nudix hydrolase domain. The short motif at 273-294 (GKINQAEPPRDAAIRETFEETG) is the Nudix box element. The Mg(2+) site is built by glutamate 288 and glutamate 292. Disordered stretches follow at residues 556-576 (IMHSPNHPLPPTSNSPATPTA) and 623-655 (ISSTQKQSIPKATAAPPSTEKTRSASLSGSSQV). Polar residues-rich tracts occupy residues 623–632 (ISSTQKQSIP) and 646–655 (SASLSGSSQV).

The protein belongs to the Nudix hydrolase family. DCP2 subfamily. May be a component of the decapping complex composed of dcap-1 and dcap-2. It depends on Mg(2+) as a cofactor. The cofactor is Mn(2+). In terms of tissue distribution, expressed in sensory neurons.

The protein resides in the cytoplasmic granule. It localises to the cytoplasm. It is found in the perinuclear region. It catalyses the reaction a 5'-end (N(7)-methyl 5'-triphosphoguanosine)-ribonucleoside in mRNA + H2O = N(7)-methyl-GDP + a 5'-end phospho-ribonucleoside in mRNA + 2 H(+). The catalysed reaction is a 5'-end (N(2),N(2),N(7)-trimethyl 5'-triphosphoguanosine)-ribonucleoside in mRNA + H2O = N(2),N(2),N(7)-trimethyl-GDP + a 5'-end phospho-ribonucleoside in mRNA + 2 H(+). Its activity is regulated as follows. Inhibited by capped and uncapped RNA. Not inhibited by dinucleotide cap or methylated nucleotide analogs. Its function is as follows. Decapping metalloenzyme that catalyzes the cleavage of the cap structure on mRNAs. Removes the 7-methyl guanine cap structure from mRNA molecules, yielding a 5'-phosphorylated mRNA fragment and 7m-GDP. RNA-decapping enzyme although it does not bind the RNA cap. May contribute to gene regulation in multiple RNA pathways including monomethylguanosine- and trimethylguanosine-capped RNAs. In oocytes, may play a role in the response to stress induced by heat shock, osmotic stress and anoxia. Required for the developmental axon guidance and regrowth of PLM touch receptor neurons. Early in embryogenesis, plays a role in ciliary shape formation in sensory neurons. Promotes survival at high temperatures. The chain is m7GpppN-mRNA hydrolase dcap-2 from Caenorhabditis elegans.